A 202-amino-acid chain; its full sequence is Response regulator RamR (202 aa).

The interval 1-121 (MGEMVRIAVV…LITAVHTVAR (121 aa)) is response regulatory. Positions 135–200 (LKGAEMPLTT…DAIRIVQSAG (66 aa)) constitute an HTH luxR-type domain. A DNA-binding region (H-T-H motif) is located at residues 159–178 (IAEIAARLHLSRGTVRNYMA).

Homodimer, in the absence of phosphorylation. In terms of processing, may be phosphorylated by an unknown kinase, probably on Asp-56.

Its function is as follows. A transcription factor required for aerial hyphae formation on rich medium. Activates transcription of ramC. Might be part of a two-component regulatory system. Binds the promoter of ramC. Non-phosphorylated protein cooperatively binds multiple sites in the ramC promoter. Has not been seen to autophosphorylate using the small molecule phosphodonors phosphoramidate, acetyl phosphate or carbamoyl phosphate. Upon low expression suppresses the bald (bld, no aerial hyphae) phenotype of citA but not bldJ mutants; higher expression also suppresses the bldJ mutant as well as several other bld mutations, inducing SapB production even on media where SapB is normally not produced. Expression of the ram locus (ramA, ramB and ramR) induces rapid aerial mycelium formation in S.lividans. Overexpression suppresses the no aerial hyphae phenotype of a chaplin-negative strain, probably by inducing expression of SapB. Overexpression of RamR show there are about 280 genes having at least a threefold increase or fourfold decrease in RNA abundance versus wild-type including gene cluster SCO4072-SCO4075. The chain is Response regulator RamR from Streptomyces coelicolor (strain ATCC BAA-471 / A3(2) / M145).